Consider the following 203-residue polypeptide: Ras-like protein family member 10A (203 aa).

The small GTPase-like stretch occupies residues 1 to 203 (MGGSLRVAVL…ALHPARCSLM (203 aa)). 11–18 (GAPGVGKT) lines the GTP pocket. Positions 33-42 (HRPTDGPRLY) match the Effector region motif. Residues 59–62 (DGDV) and 129–132 (NKRD) contribute to the GTP site. Cys200 is modified (cysteine methyl ester). Cys200 is lipidated: S-farnesyl cysteine. A propeptide spans 201-203 (SLM) (removed in mature form).

This sequence belongs to the small GTPase superfamily. Ras family. In terms of processing, isoprenylation is essential for nucleolar localization, and the proliferation-inhibiting activity of RASL10A. In terms of tissue distribution, expression appears to be strictly limited to the central nervous system.

It localises to the cell membrane. The protein resides in the nucleus. The protein localises to the nucleolus. It catalyses the reaction GTP + H2O = GDP + phosphate + H(+). Its function is as follows. Potent inhibitor of cellular proliferation. This Homo sapiens (Human) protein is Ras-like protein family member 10A (RASL10A).